We begin with the raw amino-acid sequence, 129 residues long: Small ribosomal subunit protein uS11 (129 aa).

This sequence belongs to the universal ribosomal protein uS11 family. As to quaternary structure, part of the 30S ribosomal subunit. Interacts with proteins S7 and S18. Binds to IF-3.

Its function is as follows. Located on the platform of the 30S subunit, it bridges several disparate RNA helices of the 16S rRNA. Forms part of the Shine-Dalgarno cleft in the 70S ribosome. The protein is Small ribosomal subunit protein uS11 of Zymomonas mobilis subsp. mobilis (strain ATCC 31821 / ZM4 / CP4).